The sequence spans 236 residues: Purine nucleoside phosphorylase DeoD-type (236 aa).

His-5 serves as a coordination point for a purine D-ribonucleoside. Phosphate-binding positions include Gly-21, Arg-25, Arg-44, and 88–91 (RVGT). A purine D-ribonucleoside contacts are provided by residues 180–182 (EME) and 204–205 (SD). Asp-205 serves as the catalytic Proton donor.

This sequence belongs to the PNP/UDP phosphorylase family. In terms of assembly, homohexamer; trimer of homodimers.

The enzyme catalyses a purine D-ribonucleoside + phosphate = a purine nucleobase + alpha-D-ribose 1-phosphate. It catalyses the reaction a purine 2'-deoxy-D-ribonucleoside + phosphate = a purine nucleobase + 2-deoxy-alpha-D-ribose 1-phosphate. Its function is as follows. Catalyzes the reversible phosphorolytic breakdown of the N-glycosidic bond in the beta-(deoxy)ribonucleoside molecules, with the formation of the corresponding free purine bases and pentose-1-phosphate. This chain is Purine nucleoside phosphorylase DeoD-type, found in Shewanella loihica (strain ATCC BAA-1088 / PV-4).